Reading from the N-terminus, the 408-residue chain is Imidazolonepropionase (408 aa).

2 residues coordinate Fe(3+): H73 and H75. 2 residues coordinate Zn(2+): H73 and H75. R82, Y145, and H178 together coordinate 4-imidazolone-5-propanoate. N-formimidoyl-L-glutamate is bound at residue Y145. H243 contacts Fe(3+). H243 is a Zn(2+) binding site. A 4-imidazolone-5-propanoate-binding site is contributed by Q246. Residue D318 coordinates Fe(3+). D318 is a Zn(2+) binding site. The N-formimidoyl-L-glutamate site is built by N320 and G322. Residue S323 participates in 4-imidazolone-5-propanoate binding.

Belongs to the metallo-dependent hydrolases superfamily. HutI family. Requires Zn(2+) as cofactor. Fe(3+) serves as cofactor.

Its subcellular location is the cytoplasm. The enzyme catalyses 4-imidazolone-5-propanoate + H2O = N-formimidoyl-L-glutamate. It participates in amino-acid degradation; L-histidine degradation into L-glutamate; N-formimidoyl-L-glutamate from L-histidine: step 3/3. In terms of biological role, catalyzes the hydrolytic cleavage of the carbon-nitrogen bond in imidazolone-5-propanoate to yield N-formimidoyl-L-glutamate. It is the third step in the universal histidine degradation pathway. The sequence is that of Imidazolonepropionase from Shewanella sp. (strain W3-18-1).